A 337-amino-acid polypeptide reads, in one-letter code: MIQKNWQELIKPNKVDFITHGSRTHATVVAEPLERGFGLTLGNALRRVLLSSLRGAAVTAVQIDGVLHEFSSIPGVREDVTDIVLNIKEIAIRMEGEGPKRMVVRKEGPGVVTAGDIQTVGDVEILNPEHVICTLDEGAEIRMEFTVNTGKGYVPADRNRAEDAPIGLIPVDSLYSPVRKVSYKIENTREGQVLDYDKLTLNIETNGSVTGEDAVAYAARILQDQLSIFVNFEEPQKEAPQEQVAELAFNPVLLKKVDELELSVRSANCLKTDNIVYIGDLIQKTEAEMLRTPNFGRKSLNEIKEVLASMGLHLGMEIPAWPPENIEDLAKRYEDQY.

The interval 1 to 233 (MIQKNWQELI…DQLSIFVNFE (233 aa)) is alpha N-terminal domain (alpha-NTD). Residues 249–337 (FNPVLLKKVD…DLAKRYEDQY (89 aa)) are alpha C-terminal domain (alpha-CTD).

This sequence belongs to the RNA polymerase alpha chain family. As to quaternary structure, homodimer. The RNAP catalytic core consists of 2 alpha, 1 beta, 1 beta' and 1 omega subunit. When a sigma factor is associated with the core the holoenzyme is formed, which can initiate transcription.

The enzyme catalyses RNA(n) + a ribonucleoside 5'-triphosphate = RNA(n+1) + diphosphate. Its function is as follows. DNA-dependent RNA polymerase catalyzes the transcription of DNA into RNA using the four ribonucleoside triphosphates as substrates. This is DNA-directed RNA polymerase subunit alpha from Brucella canis (strain ATCC 23365 / NCTC 10854 / RM-666).